Here is a 110-residue protein sequence, read N- to C-terminus: Flagellar hook-basal body complex protein FliE (110 aa).

It belongs to the FliE family.

The protein localises to the bacterial flagellum basal body. In Bordetella petrii (strain ATCC BAA-461 / DSM 12804 / CCUG 43448), this protein is Flagellar hook-basal body complex protein FliE.